The primary structure comprises 827 residues: Glycerol-3-phosphate acyltransferase (827 aa).

The HXXXXD motif signature appears at 309-314 (CHRSHI).

The protein belongs to the GPAT/DAPAT family.

The protein localises to the cell inner membrane. It catalyses the reaction sn-glycerol 3-phosphate + an acyl-CoA = a 1-acyl-sn-glycero-3-phosphate + CoA. It participates in phospholipid metabolism; CDP-diacylglycerol biosynthesis; CDP-diacylglycerol from sn-glycerol 3-phosphate: step 1/3. This chain is Glycerol-3-phosphate acyltransferase, found in Ectopseudomonas mendocina (strain ymp) (Pseudomonas mendocina).